A 309-amino-acid chain; its full sequence is Porphobilinogen deaminase (309 aa).

Residue cysteine 242 is modified to S-(dipyrrolylmethanemethyl)cysteine.

Belongs to the HMBS family. As to quaternary structure, monomer. Requires dipyrromethane as cofactor.

The catalysed reaction is 4 porphobilinogen + H2O = hydroxymethylbilane + 4 NH4(+). It functions in the pathway porphyrin-containing compound metabolism; protoporphyrin-IX biosynthesis; coproporphyrinogen-III from 5-aminolevulinate: step 2/4. Its function is as follows. Tetrapolymerization of the monopyrrole PBG into the hydroxymethylbilane pre-uroporphyrinogen in several discrete steps. This Shewanella frigidimarina (strain NCIMB 400) protein is Porphobilinogen deaminase.